We begin with the raw amino-acid sequence, 192 residues long: UPF0301 protein BMA10247_1859 (192 aa).

Belongs to the UPF0301 (AlgH) family.

The polypeptide is UPF0301 protein BMA10247_1859 (Burkholderia mallei (strain NCTC 10247)).